Reading from the N-terminus, the 227-residue chain is Cytochrome c oxidase subunit 2 (227 aa).

The Mitochondrial intermembrane segment spans residues 1–26; sequence MNTWMNFNLQNSNSPLMEQLMFFHNH. A helical transmembrane segment spans residues 27–48; that stretch reads SMLIILLITILVGYIMSSLLYN. Residues 49–62 are Mitochondrial matrix-facing; sequence KLYNRYLLESQNVE. A helical transmembrane segment spans residues 63-82; the sequence is IIWTILPAFMLIFIALPSLR. The Mitochondrial intermembrane segment spans residues 83–227; the sequence is LLYLLDDSNS…SFIKWISSNS (145 aa). Histidine 161, cysteine 196, glutamate 198, cysteine 200, histidine 204, and methionine 207 together coordinate Cu cation. Glutamate 198 is a Mg(2+) binding site.

This sequence belongs to the cytochrome c oxidase subunit 2 family. Component of the cytochrome c oxidase (complex IV, CIV), a multisubunit enzyme composed of a catalytic core of 3 subunits and several supernumerary subunits. The complex exists as a monomer or a dimer and forms supercomplexes (SCs) in the inner mitochondrial membrane with ubiquinol-cytochrome c oxidoreductase (cytochrome b-c1 complex, complex III, CIII). The cofactor is Cu cation.

The protein resides in the mitochondrion inner membrane. It carries out the reaction 4 Fe(II)-[cytochrome c] + O2 + 8 H(+)(in) = 4 Fe(III)-[cytochrome c] + 2 H2O + 4 H(+)(out). Its function is as follows. Component of the cytochrome c oxidase, the last enzyme in the mitochondrial electron transport chain which drives oxidative phosphorylation. The respiratory chain contains 3 multisubunit complexes succinate dehydrogenase (complex II, CII), ubiquinol-cytochrome c oxidoreductase (cytochrome b-c1 complex, complex III, CIII) and cytochrome c oxidase (complex IV, CIV), that cooperate to transfer electrons derived from NADH and succinate to molecular oxygen, creating an electrochemical gradient over the inner membrane that drives transmembrane transport and the ATP synthase. Cytochrome c oxidase is the component of the respiratory chain that catalyzes the reduction of oxygen to water. Electrons originating from reduced cytochrome c in the intermembrane space (IMS) are transferred via the dinuclear copper A center (CU(A)) of subunit 2 and heme A of subunit 1 to the active site in subunit 1, a binuclear center (BNC) formed by heme A3 and copper B (CU(B)). The BNC reduces molecular oxygen to 2 water molecules using 4 electrons from cytochrome c in the IMS and 4 protons from the mitochondrial matrix. The chain is Cytochrome c oxidase subunit 2 (COII) from Ctenocephalides felis (Cat flea).